The primary structure comprises 208 residues: Uracil phosphoribosyltransferase (208 aa).

5-phospho-alpha-D-ribose 1-diphosphate is bound by residues Arg-78, Arg-103, and 130-138 (DPMLATGGS). Uracil contacts are provided by residues Ile-193 and 198-200 (GDA). Residue Asp-199 participates in 5-phospho-alpha-D-ribose 1-diphosphate binding.

It belongs to the UPRTase family. Mg(2+) serves as cofactor.

It catalyses the reaction UMP + diphosphate = 5-phospho-alpha-D-ribose 1-diphosphate + uracil. It participates in pyrimidine metabolism; UMP biosynthesis via salvage pathway; UMP from uracil: step 1/1. Allosterically activated by GTP. Catalyzes the conversion of uracil and 5-phospho-alpha-D-ribose 1-diphosphate (PRPP) to UMP and diphosphate. This is Uracil phosphoribosyltransferase from Escherichia coli O139:H28 (strain E24377A / ETEC).